Reading from the N-terminus, the 1921-residue chain is Disks large homolog 5 (1921 aa).

Residues 1-90 (MEPQRRELLA…HLLPILYLNG (90 aa)) form the CARD domain. A disordered region spans residues 116-143 (ESSSSLSSVGTTGKAPSPPPLLTEQQAN). Residues 139-601 (EQQANDTVEN…KEARFRQLMA (463 aa)) are a coiled coil. 2 positions are modified to phosphoserine: serine 264 and serine 295. PDZ domains are found at residues 620–710 (VVEF…RRRK) and 705–796 (VVRR…LKVF). Residues 857 to 898 (ELGHSGGSSSFLHKPFSGSSSPVSPQACPSTSERSLNSFRSD) form a disordered region. A compositionally biased stretch (polar residues) spans 873–898 (SGSSSPVSPQACPSTSERSLNSFRSD). Serine 900 carries the post-translational modification Phosphoserine. The interval 930 to 1121 (EVPLDKIDPE…RPKSAPSFRP (192 aa)) is disordered. A Phosphothreonine modification is found at threonine 984. Phosphoserine is present on serine 1000. A Phosphothreonine modification is found at threonine 1011. Basic and acidic residues predominate over residues 1017 to 1030 (RRSDSIKFQHRLET). The residue at position 1021 (serine 1021) is a Phosphoserine. Over residues 1045 to 1055 (TSPPSAPPPSM) the composition is skewed to pro residues. Threonine 1183 carries the post-translational modification Phosphothreonine. Disordered stretches follow at residues 1204–1227 (VLPC…SVQH), 1243–1266 (YSEM…SSSN), and 1280–1343 (PRYP…KDRP). Serine 1209 is subject to Phosphoserine. The span at 1217–1227 (GSQSLSPSVQH) shows a compositional bias: polar residues. The segment covering 1252–1266 (SNSLPSSARLGSSSN) has biased composition (low complexity). Phosphoserine is present on serine 1263. Positions 1292 to 1324 (GSLSHSECSTPPRSPLNIDTLSSCSQPQTTAST) are enriched in polar residues. Serine 1334 carries the phosphoserine modification. The 80-residue stretch at 1350-1429 (HVKVQKGSEP…TITILAQYNP (80 aa)) folds into the PDZ 3 domain. 3 stretches are compositionally biased toward polar residues: residues 1434-1443 (LNSHSRSSSH), 1450-1460 (PHSTLQGSSAG), and 1483-1495 (AKQS…SVGD). The interval 1434–1501 (LNSHSRSSSH…SVGDTTKKTP (68 aa)) is disordered. The PDZ 4 domain occupies 1504–1585 (RIVFIKKSQL…SLRLKVQYRH (82 aa)). The 69-residue stretch at 1596-1664 (GDSFYIRALY…PSKYVMDQEF (69 aa)) folds into the SH3 domain. Phosphoserine is present on serine 1669. Residues 1724 to 1907 (DSVSLAYQRV…ICTQILAMVS (184 aa)) enclose the Guanylate kinase-like domain.

Belongs to the MAGUK family. As to quaternary structure, interacts with MPP1. Interacts with CTNNB1 and with the third SH3 domain of SORBS3 to form a ternary complex. Interacts (via coiled-coil domain) with MARK3. Interacts (via PDZ domain 3) with STK3/MST2 and STK4/MST1. Interacts with SCRIB. Interacts with CTNB1. Interacts with SMO and (via PDZ4 or guanylate kinase-like domain) with KIF7. Brain (at protein level).

The protein localises to the cell junction. Its subcellular location is the cell membrane. The protein resides in the postsynaptic density. It localises to the cytoplasm. It is found in the cytoskeleton. The protein localises to the cilium basal body. In terms of biological role, acts as a regulator of the Hippo signaling pathway. Negatively regulates the Hippo signaling pathway by mediating the interaction of MARK3 with STK3/4, bringing them together to promote MARK3-dependent hyperphosphorylation and inactivation of STK3 kinase activity toward LATS1. Positively regulates the Hippo signaling by mediating the interaction of SCRIB with STK4/MST1 and LATS1 which is important for the activation of the Hippo signaling pathway. Involved in regulating cell proliferation, maintenance of epithelial polarity, epithelial-mesenchymal transition (EMT), cell migration and invasion. Plays an important role in dendritic spine formation and synaptogenesis in cortical neurons; regulates synaptogenesis by enhancing the cell surface localization of N-cadherin. Acts as a positive regulator of hedgehog (Hh) signaling pathway. Plays a critical role in the early point of the SMO activity cycle by interacting with SMO at the ciliary base to induce the accumulation of KIF7 and GLI2 at the ciliary tip for GLI2 activation. The chain is Disks large homolog 5 (Dlg5) from Mus musculus (Mouse).